The primary structure comprises 651 residues: Protein SCARECROW 1 (651 aa).

2 disordered regions span residues 1–33 (MGSS…ITSL) and 188–277 (SDPA…KQRD). Pro residues predominate over residues 190 to 228 (PAPPPPPPPSHPALLPPDATAPPPPPTSVAALPPPPPPQ). Residues 253–280 (TAEETAAAAAAAKERKEEQRRKQRDEEG) adopt a coiled-coil conformation. Positions 254–263 (AEETAAAAAA) are enriched in low complexity. The span at 264–277 (AKERKEEQRRKQRD) shows a compositional bias: basic and acidic residues. One can recognise a GRAS domain in the interval 274–644 (KQRDEEGLHL…LCLLTASAWR (371 aa)). Residues 281–345 (LHLLTLLLQC…VSSCLGLYAP (65 aa)) form a leucine repeat I (LRI) region. Positions 288–292 (LQCAE) match the LxCxE motif motif. The tract at residues 364-429 (FQVFNGISPF…GGPPRVRLTG (66 aa)) is VHIID. Positions 395–399 (VHIID) match the VHIID motif. The leucine repeat II (LRII) stretch occupies residues 439 to 471 (ATGKRLSDFADTLGLPFEFCPVADKAGNLDPEK). Positions 480 to 567 (VAVHWLRHSL…QQLLSREIRN (88 aa)) are PFYRE. An SAW region spans residues 570–644 (AVGGPARTGD…LCLLTASAWR (75 aa)).

This sequence belongs to the GRAS family. As to quaternary structure, interacts with SHR1, but not with SHR2. As to expression, expressed in the initial daughter cell before its asymmetric division and remains expressed in the endodermal cell layer after the division.

It is found in the nucleus. In terms of biological role, transcription factor required for quiescent center cells specification and maintenance of surrounding stem cells, and for the asymmetric cell division involved in radial pattern formation in roots. Essential for cell division but not differentiation of the ground tissue. Regulates the radial organization of the shoot axial organs. Restricts SHR movment and sequesters it into the nucleus of the endodermis. In Oryza sativa subsp. japonica (Rice), this protein is Protein SCARECROW 1 (SCR1).